The following is a 113-amino-acid chain: Large ribosomal subunit protein P1z (113 aa).

The interval 87–113 is disordered; it reads AAAPAKEEKKDEPAEESDGDLGFGLFD. Phosphoserine is present on serine 103.

The protein belongs to the eukaryotic ribosomal protein P1/P2 family. In terms of assembly, P1 and P2 exist as dimers at the large ribosomal subunit.

In terms of biological role, plays an important role in the elongation step of protein synthesis. In Arabidopsis thaliana (Mouse-ear cress), this protein is Large ribosomal subunit protein P1z (RPP1B).